The chain runs to 201 residues: Recombination protein RecR (201 aa).

The C4-type zinc-finger motif lies at 57-72; it reads CQVCYSLSDNDICDIC. Residues 80-177 form the Toprim domain; sequence NKICIVESYP…RITRITYGIS (98 aa).

It belongs to the RecR family.

Functionally, may play a role in DNA repair. It seems to be involved in an RecBC-independent recombinational process of DNA repair. It may act with RecF and RecO. The polypeptide is Recombination protein RecR (Brachyspira hyodysenteriae (strain ATCC 49526 / WA1)).